Here is a 208-residue protein sequence, read N- to C-terminus: UPF0637 protein BCQ_3749 (208 aa).

The protein belongs to the UPF0637 family.

This chain is UPF0637 protein BCQ_3749, found in Bacillus cereus (strain Q1).